We begin with the raw amino-acid sequence, 278 residues long: Shikimate dehydrogenase (NADP(+)) (278 aa).

Residues 18–20 (SRS) and T65 each bind shikimate. Catalysis depends on K69, which acts as the Proton acceptor. E80 is an NADP(+) binding site. Residues N89 and D104 each coordinate shikimate. NADP(+) contacts are provided by residues 129–133 (GAGGS) and L218. Y220 is a shikimate binding site. G241 serves as a coordination point for NADP(+).

This sequence belongs to the shikimate dehydrogenase family. Homodimer.

The catalysed reaction is shikimate + NADP(+) = 3-dehydroshikimate + NADPH + H(+). It participates in metabolic intermediate biosynthesis; chorismate biosynthesis; chorismate from D-erythrose 4-phosphate and phosphoenolpyruvate: step 4/7. Its function is as follows. Involved in the biosynthesis of the chorismate, which leads to the biosynthesis of aromatic amino acids. Catalyzes the reversible NADPH linked reduction of 3-dehydroshikimate (DHSA) to yield shikimate (SA). The polypeptide is Shikimate dehydrogenase (NADP(+)) (Rhodopseudomonas palustris (strain TIE-1)).